A 968-amino-acid polypeptide reads, in one-letter code: RNA polymerase-associated protein RapA (968 aa).

The Helicase ATP-binding domain maps to 164–334; it reads EVGQRHAPRV…FARLRLLDPD (171 aa). Residue 177-184 coordinates ATP; that stretch reads DEVGLGKT. A DEAH box motif is present at residues 280 to 283; the sequence is DEAH. A Helicase C-terminal domain is found at 490–644; the sequence is RVEWLLNYLV…TCPTGRTIYD (155 aa).

It belongs to the SNF2/RAD54 helicase family. RapA subfamily. Interacts with the RNAP. Has a higher affinity for the core RNAP than for the holoenzyme. Its ATPase activity is stimulated by binding to RNAP.

Transcription regulator that activates transcription by stimulating RNA polymerase (RNAP) recycling in case of stress conditions such as supercoiled DNA or high salt concentrations. Probably acts by releasing the RNAP, when it is trapped or immobilized on tightly supercoiled DNA. Does not activate transcription on linear DNA. Probably not involved in DNA repair. In Yersinia pseudotuberculosis serotype O:1b (strain IP 31758), this protein is RNA polymerase-associated protein RapA.